Consider the following 96-residue polypeptide: MNQEKILKILLAPIVSEKTTMLSAHNQYAFKVRVDCSKREIKAAVEMLFSVNVENVTTSIVKGKKKIFKGRIGSRPNWKKAMVKVSEGQMIDVSRT.

The protein belongs to the universal ribosomal protein uL23 family. As to quaternary structure, part of the 50S ribosomal subunit. Contacts protein L29, and trigger factor when it is bound to the ribosome.

One of the early assembly proteins it binds 23S rRNA. One of the proteins that surrounds the polypeptide exit tunnel on the outside of the ribosome. Forms the main docking site for trigger factor binding to the ribosome. The protein is Large ribosomal subunit protein uL23 of Ruthia magnifica subsp. Calyptogena magnifica.